A 641-amino-acid polypeptide reads, in one-letter code: ATP-dependent DNA helicase PIF1 (641 aa).

A PINT region spans residues 1–180; the sequence is MLSGIEAAAG…LVKRPVEPQA (180 aa). 2 positions are modified to phosphoserine: Ser-27 and Ser-151. A hydrolyzes ATP in the presence of both magnesium and single-stranded DNA; weak activity in the presence of RNA or double-stranded DNA; No unwinding activity region spans residues 167–641; that stretch reads PDTTLVKRPV…SDQENMDPIL (475 aa). The tract at residues 173–192 is disordered; the sequence is KRPVEPQAGAEPSTEAPRWP. Residue 228 to 235 participates in ATP binding; that stretch reads GSAGTGKS. The DNA-binding element occupies 577–596; the sequence is QAYVALSRARSLQGLRVLDF. A disordered region spans residues 622-641; the sequence is LESPDDDEAASDQENMDPIL. The span at 624–641 shows a compositional bias: acidic residues; that stretch reads SPDDDEAASDQENMDPIL.

The protein belongs to the helicase family. PIF1 subfamily. Monomer. Interacts with telomerase. Mg(2+) is required as a cofactor. In terms of tissue distribution, weak ubiquitous expression.

It is found in the nucleus. The protein localises to the mitochondrion. It carries out the reaction Couples ATP hydrolysis with the unwinding of duplex DNA at the replication fork by translocating in the 5'-3' direction. This creates two antiparallel DNA single strands (ssDNA). The leading ssDNA polymer is the template for DNA polymerase III holoenzyme which synthesizes a continuous strand.. The enzyme catalyses ATP + H2O = ADP + phosphate + H(+). Its function is as follows. DNA-dependent ATPase and 5'-3' DNA helicase required for the maintenance of both mitochondrial and nuclear genome stability. Efficiently unwinds G-quadruplex (G4) DNA structures and forked RNA-DNA hybrids. Resolves G4 structures, preventing replication pausing and double-strand breaks (DSBs) at G4 motifs. Involved in the maintenance of telomeric DNA. Inhibits telomere elongation, de novo telomere formation and telomere addition to DSBs via catalytic inhibition of telomerase. Reduces the processivity of telomerase by displacing active telomerase from DNA ends. Releases telomerase by unwinding the short telomerase RNA/telomeric DNA hybrid that is the intermediate in the telomerase reaction. Possesses an intrinsic strand annealing activity. The chain is ATP-dependent DNA helicase PIF1 from Homo sapiens (Human).